The sequence spans 359 residues: tRNA-specific 2-thiouridylase MnmA (359 aa).

ATP is bound by residues 6 to 13 (AMSGGVDS) and Leu-32. The Nucleophile role is filled by Cys-101. Residues Cys-101 and Cys-193 are joined by a disulfide bond. Gly-125 lines the ATP pocket. Positions 143–145 (KDQ) are interaction with tRNA. The active-site Cysteine persulfide intermediate is the Cys-193.

The protein belongs to the MnmA/TRMU family.

The protein resides in the cytoplasm. The catalysed reaction is S-sulfanyl-L-cysteinyl-[protein] + uridine(34) in tRNA + AH2 + ATP = 2-thiouridine(34) in tRNA + L-cysteinyl-[protein] + A + AMP + diphosphate + H(+). Its function is as follows. Catalyzes the 2-thiolation of uridine at the wobble position (U34) of tRNA, leading to the formation of s(2)U34. In Mycobacterium sp. (strain JLS), this protein is tRNA-specific 2-thiouridylase MnmA.